A 426-amino-acid polypeptide reads, in one-letter code: Serine--tRNA ligase (426 aa).

L-serine is bound at residue 233–235 (TAE). Residue 264 to 266 (RSE) coordinates ATP. Glu-287 contributes to the L-serine binding site. 351–354 (EISS) provides a ligand contact to ATP. Residue Ser-387 participates in L-serine binding.

It belongs to the class-II aminoacyl-tRNA synthetase family. Type-1 seryl-tRNA synthetase subfamily. In terms of assembly, homodimer. The tRNA molecule binds across the dimer.

It localises to the cytoplasm. It carries out the reaction tRNA(Ser) + L-serine + ATP = L-seryl-tRNA(Ser) + AMP + diphosphate + H(+). The enzyme catalyses tRNA(Sec) + L-serine + ATP = L-seryl-tRNA(Sec) + AMP + diphosphate + H(+). The protein operates within aminoacyl-tRNA biosynthesis; selenocysteinyl-tRNA(Sec) biosynthesis; L-seryl-tRNA(Sec) from L-serine and tRNA(Sec): step 1/1. In terms of biological role, catalyzes the attachment of serine to tRNA(Ser). Is also able to aminoacylate tRNA(Sec) with serine, to form the misacylated tRNA L-seryl-tRNA(Sec), which will be further converted into selenocysteinyl-tRNA(Sec). The protein is Serine--tRNA ligase of Pseudomonas aeruginosa (strain LESB58).